Here is a 94-residue protein sequence, read N- to C-terminus: Co-chaperonin GroES (94 aa).

It belongs to the GroES chaperonin family. In terms of assembly, heptamer of 7 subunits arranged in a ring. Interacts with the chaperonin GroEL.

The protein resides in the cytoplasm. Together with the chaperonin GroEL, plays an essential role in assisting protein folding. The GroEL-GroES system forms a nano-cage that allows encapsulation of the non-native substrate proteins and provides a physical environment optimized to promote and accelerate protein folding. GroES binds to the apical surface of the GroEL ring, thereby capping the opening of the GroEL channel. This Clostridioides difficile (strain 630) (Peptoclostridium difficile) protein is Co-chaperonin GroES.